The chain runs to 242 residues: 7-cyano-7-deazaguanine synthase (242 aa).

14-24 (FSGGQDSATCL) is an ATP binding site. Zn(2+) is bound by residues C202, C217, C220, and C223.

Belongs to the QueC family. It depends on Zn(2+) as a cofactor.

It carries out the reaction 7-carboxy-7-deazaguanine + NH4(+) + ATP = 7-cyano-7-deazaguanine + ADP + phosphate + H2O + H(+). The protein operates within purine metabolism; 7-cyano-7-deazaguanine biosynthesis. Functionally, catalyzes the ATP-dependent conversion of 7-carboxy-7-deazaguanine (CDG) to 7-cyano-7-deazaguanine (preQ(0)). In Rhodopseudomonas palustris (strain BisA53), this protein is 7-cyano-7-deazaguanine synthase.